Here is a 453-residue protein sequence, read N- to C-terminus: Secreted triacylglycerol lipase LIP2 (453 aa).

A signal peptide spans 1-19 (MKLSLVVLTLISVAAQALA). N-linked (GlcNAc...) asparagine glycosylation occurs at Asn-98. Residues Cys-115 and Cys-284 are joined by a disulfide bond. Residue Ser-197 is the Nucleophile of the active site. Asn-230 carries N-linked (GlcNAc...) asparagine glycosylation. Catalysis depends on residues Asp-344 and His-378. A disulfide bridge links Cys-360 with Cys-406.

The protein belongs to the AB hydrolase superfamily. Lipase family. Class Lip subfamily.

It is found in the secreted. The enzyme catalyses a triacylglycerol + H2O = a diacylglycerol + a fatty acid + H(+). It carries out the reaction a monoacylglycerol + H2O = glycerol + a fatty acid + H(+). It catalyses the reaction a diacylglycerol + H2O = a monoacylglycerol + a fatty acid + H(+). The activity is significantly increased in the presence of Triton X-100 and partially inhibited by PMSF but unaffected by univalent and divalent metal ions. Activity is significantly decreased in acetate buffer compared to that in citrate buffer at the same pH. In terms of biological role, major secreted lipase involved in Dandruff and seborrheic dermatitis (D/SD) probably via lipase-mediated breakdown of sebaceous lipids and release of irritating free fatty acids. Has triacylglycerol lipase activity and is able to hydrolyze triolein, tristearin, trilinolein, tripalmitoylglycerol and trihexadecenoin. Hydrolyze diacylglycerols such as distearin, dilinolein, dipalmitoylglycerol and dipalmitolein. Shows high esterase activity against 4-nitrophenyl palmitate and 1-naphthyl palmitate but not 1-naphthyl acetate, suggesting that it specifically recognizes fatty acids. Mostly converts monoolein to di- and triolein, while free fatty acids are only produced in low amounts. The protein is Secreted triacylglycerol lipase LIP2 of Malassezia globosa (strain ATCC MYA-4612 / CBS 7966) (Dandruff-associated fungus).